Here is a 102-residue protein sequence, read N- to C-terminus: Vacuolar ATPase assembly integral membrane protein VMA21 (102 aa).

The Cytoplasmic segment spans residues 1–30; the sequence is MERYDKATLNAAFAPEFRQNEGSLTSTLRT. Residues 31-51 traverse the membrane as a helical segment; it reads LLFFTALMITLPVGLYFSSKA. At 52-66 the chain is on the lumenal side; the sequence is YIFEGTLGMSNRDSY. The helical transmembrane segment at 67–87 threads the bilayer; that stretch reads FYAAIVAVVTVHVVLAMFVYV. The Cytoplasmic segment spans residues 88–102; the sequence is AWSEGTRQWREGKQD.

This sequence belongs to the VMA21 family. As to quaternary structure, associates with the V0 complex of the vacuolar ATPase (V-ATPase). Interacts with ATP6AP2.

It localises to the endoplasmic reticulum membrane. Its subcellular location is the endoplasmic reticulum-Golgi intermediate compartment membrane. It is found in the cytoplasmic vesicle. The protein localises to the COPII-coated vesicle membrane. Required for the assembly of the V0 complex of the vacuolar ATPase (V-ATPase) in the endoplasmic reticulum. This is Vacuolar ATPase assembly integral membrane protein VMA21 from Gallus gallus (Chicken).